The following is a 194-amino-acid chain: MPKVGMREIRRAQLIDATLRSIDEAGLPGTTLASVAQRANISTGIVSHYFGDKDGLLEATMRHVLRDLWSATTRRRVAARKDPRSRLRAVVAANFDDTQVSAPVMKTWLAFWSQSMHDPMLKRLQHVNTRRLHSNLCAEFAKALPRTKAREAASGLAALIDGLWLRGALAGGPIDTRAALKLAHDYIDLLLASD.

One can recognise an HTH tetR-type domain in the interval 8 to 68; sequence EIRRAQLIDA…ATMRHVLRDL (61 aa). The H-T-H motif DNA-binding region spans 31 to 50; that stretch reads TLASVAQRANISTGIVSHYF.

Its pathway is amine and polyamine biosynthesis; betaine biosynthesis via choline pathway [regulation]. Its function is as follows. Repressor involved in the biosynthesis of the osmoprotectant glycine betaine. It represses transcription of the choline transporter BetT and the genes of BetAB involved in the synthesis of glycine betaine. This is HTH-type transcriptional regulator BetI from Burkholderia cenocepacia (strain ATCC BAA-245 / DSM 16553 / LMG 16656 / NCTC 13227 / J2315 / CF5610) (Burkholderia cepacia (strain J2315)).